A 134-amino-acid polypeptide reads, in one-letter code: MKKSAILNEHISKAIATIGHFDLLTINDAGMPIPNDHRRIDLAVTKNLPRFIDVLATVLEEMEIQKIYLAEEIKEHNPTQLQQIKQLISSEIEIIFIPHEEMKSNLAHPLNKGNIRTGETTPYSNIALESNVTF.

H20 acts as the Proton donor in catalysis. Substrate-binding positions include D28, H99, and 123 to 125 (YSN).

The protein belongs to the RbsD / FucU family. RbsD subfamily. Homodecamer.

Its subcellular location is the cytoplasm. It carries out the reaction beta-D-ribopyranose = beta-D-ribofuranose. Its pathway is carbohydrate metabolism; D-ribose degradation; D-ribose 5-phosphate from beta-D-ribopyranose: step 1/2. Its function is as follows. Catalyzes the interconversion of beta-pyran and beta-furan forms of D-ribose. The polypeptide is D-ribose pyranase (Staphylococcus aureus (strain USA300)).